The primary structure comprises 182 residues: MPTPRKIETVSTLTEKLNRAQLVVVADYRGDGKGMSVADMTELRRKLREHGGEVVVAKNTLLKIAAHNTGHEALDPLLAGPTAVTLGYDDVSKVAKALLDYLKSGNKSFTVRGALLGNTLLPADALEQVTKLPSREQALAQVVGGIAAPVSGVVGVLNAAISNVLYVLQARIDQLQPQGETA.

It belongs to the universal ribosomal protein uL10 family. Part of the ribosomal stalk of the 50S ribosomal subunit. The N-terminus interacts with L11 and the large rRNA to form the base of the stalk. The C-terminus forms an elongated spine to which L12 dimers bind in a sequential fashion forming a multimeric L10(L12)X complex.

Its function is as follows. Forms part of the ribosomal stalk, playing a central role in the interaction of the ribosome with GTP-bound translation factors. The sequence is that of Large ribosomal subunit protein uL10 from Chloroflexus aurantiacus (strain ATCC 29364 / DSM 637 / Y-400-fl).